The sequence spans 568 residues: Type 3 secretion system secretin (568 aa).

Positions 1 to 15 (MAAALLLWTAGTVCA) are cleaved as a signal peptide. The disordered stretch occupies residues 203–292 (YGGDGPSDSG…RGSTPIIRAD (90 aa)). A compositionally biased stretch (gly residues) spans 243 to 257 (LGGGKSPLPPGGTGQ). The span at 273–284 (NRLRSDELDDRG) shows a compositional bias: basic and acidic residues.

This sequence belongs to the bacterial secretin family. T3SS SctC subfamily. As to quaternary structure, the core secretion machinery of the T3SS is composed of approximately 20 different proteins, including cytoplasmic components, a base, an export apparatus and a needle. This subunit is part of the base, which anchors the injectisome in the bacterial cell envelope. Forms a stable homooligomeric complex.

It is found in the cell outer membrane. In terms of biological role, component of the type III secretion system (T3SS), also called injectisome, which is used to inject bacterial effector proteins into eukaryotic host cells. Forms a ring-shaped multimeric structure with an apparent central pore in the outer membrane. The chain is Type 3 secretion system secretin from Ralstonia nicotianae (strain ATCC BAA-1114 / GMI1000) (Ralstonia solanacearum).